The primary structure comprises 219 residues: Chloramphenicol acetyltransferase (219 aa).

Catalysis depends on His190, which acts as the Proton acceptor.

Belongs to the chloramphenicol acetyltransferase family. As to quaternary structure, homotrimer.

The catalysed reaction is chloramphenicol + acetyl-CoA = chloramphenicol 3-acetate + CoA. Functionally, this enzyme is an effector of chloramphenicol resistance in bacteria. The protein is Chloramphenicol acetyltransferase (catQ) of Clostridium perfringens.